The chain runs to 895 residues: DNA mismatch repair protein MutS (895 aa).

An ATP-binding site is contributed by 607–614 (GPNMSGKS).

This sequence belongs to the DNA mismatch repair MutS family.

This protein is involved in the repair of mismatches in DNA. It is possible that it carries out the mismatch recognition step. This protein has a weak ATPase activity. The sequence is that of DNA mismatch repair protein MutS from Bacillus cytotoxicus (strain DSM 22905 / CIP 110041 / 391-98 / NVH 391-98).